The chain runs to 81 residues: Defensin-like protein 266 (81 aa).

Residues 1–26 form the signal peptide; it reads MEKIVFRKIVFVAFLLSLSCLLEGEA. Disulfide bonds link Cys40–Cys58, Cys46–Cys63, and Cys50–Cys65.

It belongs to the DEFL family.

Its subcellular location is the secreted. This Arabidopsis thaliana (Mouse-ear cress) protein is Defensin-like protein 266.